Here is a 248-residue protein sequence, read N- to C-terminus: Pyridoxine 5'-phosphate synthase (248 aa).

A 3-amino-2-oxopropyl phosphate-binding site is contributed by Asn12. Residue 14 to 15 (DH) participates in 1-deoxy-D-xylulose 5-phosphate binding. Position 23 (Arg23) interacts with 3-amino-2-oxopropyl phosphate. The Proton acceptor role is filled by His48. The 1-deoxy-D-xylulose 5-phosphate site is built by Arg50 and His55. Glu75 acts as the Proton acceptor in catalysis. Thr105 contributes to the 1-deoxy-D-xylulose 5-phosphate binding site. His196 functions as the Proton donor in the catalytic mechanism. 3-amino-2-oxopropyl phosphate is bound by residues Gly197 and 218–219 (GH).

Belongs to the PNP synthase family. In terms of assembly, homooctamer; tetramer of dimers.

The protein localises to the cytoplasm. The enzyme catalyses 3-amino-2-oxopropyl phosphate + 1-deoxy-D-xylulose 5-phosphate = pyridoxine 5'-phosphate + phosphate + 2 H2O + H(+). Its pathway is cofactor biosynthesis; pyridoxine 5'-phosphate biosynthesis; pyridoxine 5'-phosphate from D-erythrose 4-phosphate: step 5/5. Its function is as follows. Catalyzes the complicated ring closure reaction between the two acyclic compounds 1-deoxy-D-xylulose-5-phosphate (DXP) and 3-amino-2-oxopropyl phosphate (1-amino-acetone-3-phosphate or AAP) to form pyridoxine 5'-phosphate (PNP) and inorganic phosphate. This chain is Pyridoxine 5'-phosphate synthase, found in Ectopseudomonas mendocina (strain ymp) (Pseudomonas mendocina).